Consider the following 1295-residue polypeptide: Phosphoribosylformylglycinamidine synthase (1295 aa).

Residues 305–327 (WPGAATGSGGEIRDEGATGRGAK) form a disordered region. ATP contacts are provided by residues 307–318 (GAATGSGGEIRD) and Ala678. Residues Glu718, Asn722, and Asp884 each contribute to the Mg(2+) site. Ser886 contacts ATP. Residues 1042–1295 (VAVLREQGVN…IFRNARKQLG (254 aa)) form the Glutamine amidotransferase type-1 domain. The Nucleophile role is filled by Cys1135. Active-site residues include His1260 and Glu1262.

The protein in the N-terminal section; belongs to the FGAMS family. As to quaternary structure, monomer.

Its subcellular location is the cytoplasm. The enzyme catalyses N(2)-formyl-N(1)-(5-phospho-beta-D-ribosyl)glycinamide + L-glutamine + ATP + H2O = 2-formamido-N(1)-(5-O-phospho-beta-D-ribosyl)acetamidine + L-glutamate + ADP + phosphate + H(+). It participates in purine metabolism; IMP biosynthesis via de novo pathway; 5-amino-1-(5-phospho-D-ribosyl)imidazole from N(2)-formyl-N(1)-(5-phospho-D-ribosyl)glycinamide: step 1/2. Phosphoribosylformylglycinamidine synthase involved in the purines biosynthetic pathway. Catalyzes the ATP-dependent conversion of formylglycinamide ribonucleotide (FGAR) and glutamine to yield formylglycinamidine ribonucleotide (FGAM) and glutamate. This is Phosphoribosylformylglycinamidine synthase from Shigella sonnei (strain Ss046).